The sequence spans 824 residues: MSSLLNFYRKVLNVPLSLLVKSRAIPTDPVKELNLNLEQPIIYVLPYTSQTDLLILQKNCLSLNLPDPLQNNELNGQSLPRYVFLDEGRRFFKSKGAKSETESIFYRYLDLHRNNESLDVQLIPASVLWGRSPGKESEPHLRLMSSFQRIISMIWFGRDNFVRFSQALSLKYMVAEHGADEGIAQKLARVAKIHFAKQRYSAMGPRLPDRQAMFNKIIQSPAIKVAIEEEAKTKKISIEKARQEAEKIVNEIAADVSHESLRIADRVLSWLWNKLYQGINVQNGDRVRKLALEGHEIVYVPCHRSHMDYLLLSYLLYHQGLVPPHIAAGINLNFFPAGPIFRSWGAFFIRRTFKGNRLYSTIFREYLAELFYRGYSVEYFIEGGRSRTGRLLEPKTGMMSMTLQALQRGLTRPISIVPVYIGYEHVLEVDTYAKELRGAEKEKENAGLVLRVIKKLKNLGQCYVNFAEPIQVNNYLNQHFPEWKESQAEDSRPKWLNEAVDSVAHQVMININKAAAINAKNLIGSVLLASRQRALAREQLIEQVDSYLQLFKNVSYSDDAIVPNDNAEEMLNHVLTLPRSGVISEKDSFGEMIRLDRESAVLMTYYRNNIQHLFVLPSLVASIILHHESVSKDLIIKTVNRIYPFLKAELFLHFEENDVRNQVEAILTEFSAQRIVKYESDVLQINCVRVRALQLHAAGVREILQRYYISLSILLEHPEISRAALEKESRSIAQRLSILHGINAPEFFDKALFSTFSASLKAQGYFDSEGNCILEKAKEAEEILRSLISVEVQLTIQGAMEKVEEVENTETVVKTAEAVTEKNE.

The HXXXXD motif signature appears at Cys302 to Met307.

It belongs to the GPAT/DAPAT family.

The protein resides in the cell inner membrane. The catalysed reaction is sn-glycerol 3-phosphate + an acyl-CoA = a 1-acyl-sn-glycero-3-phosphate + CoA. It participates in phospholipid metabolism; CDP-diacylglycerol biosynthesis; CDP-diacylglycerol from sn-glycerol 3-phosphate: step 1/3. The polypeptide is Glycerol-3-phosphate acyltransferase (Actinobacillus pleuropneumoniae serotype 5b (strain L20)).